The chain runs to 307 residues: Aspartate carbamoyltransferase catalytic subunit (307 aa).

Residues R54 and T55 each contribute to the carbamoyl phosphate site. K83 is an L-aspartate binding site. Positions 104, 132, and 135 each coordinate carbamoyl phosphate. Residues R165 and R228 each contribute to the L-aspartate site. Residues L267 and P268 each contribute to the carbamoyl phosphate site.

The protein belongs to the aspartate/ornithine carbamoyltransferase superfamily. ATCase family. In terms of assembly, heterododecamer (2C3:3R2) of six catalytic PyrB chains organized as two trimers (C3), and six regulatory PyrI chains organized as three dimers (R2).

The enzyme catalyses carbamoyl phosphate + L-aspartate = N-carbamoyl-L-aspartate + phosphate + H(+). The protein operates within pyrimidine metabolism; UMP biosynthesis via de novo pathway; (S)-dihydroorotate from bicarbonate: step 2/3. Its function is as follows. Catalyzes the condensation of carbamoyl phosphate and aspartate to form carbamoyl aspartate and inorganic phosphate, the committed step in the de novo pyrimidine nucleotide biosynthesis pathway. This chain is Aspartate carbamoyltransferase catalytic subunit, found in Clostridium botulinum (strain ATCC 19397 / Type A).